We begin with the raw amino-acid sequence, 213 residues long: Lysozyme g-like protein 2 (213 aa).

An N-terminal signal peptide occupies residues 1–19 (MVPSVVFWGLIALVGTAKG). 2 disulfide bridges follow: cysteine 40–cysteine 93 and cysteine 54–cysteine 62. Glutamate 106 is a catalytic residue.

Belongs to the glycosyl hydrolase 23 family.

It localises to the secreted. Its function is as follows. May act as a potent antibacterial protein that may play a role in the innate immunity. This is Lysozyme g-like protein 2 (Lyg2) from Mus musculus (Mouse).